The chain runs to 296 residues: Homoserine kinase (296 aa).

85-95 (PVARGLGSSAA) contributes to the ATP binding site.

The protein belongs to the GHMP kinase family. Homoserine kinase subfamily.

It is found in the cytoplasm. It carries out the reaction L-homoserine + ATP = O-phospho-L-homoserine + ADP + H(+). It participates in amino-acid biosynthesis; L-threonine biosynthesis; L-threonine from L-aspartate: step 4/5. Functionally, catalyzes the ATP-dependent phosphorylation of L-homoserine to L-homoserine phosphate. The protein is Homoserine kinase of Moorella thermoacetica (strain ATCC 39073 / JCM 9320).